A 353-amino-acid chain; its full sequence is Ferredoxin--NADP reductase (353 aa).

8 residues coordinate FAD: T25, E44, Q52, Y57, V97, F132, D298, and S339.

Belongs to the ferredoxin--NADP reductase type 2 family. As to quaternary structure, homodimer. Requires FAD as cofactor.

It catalyses the reaction 2 reduced [2Fe-2S]-[ferredoxin] + NADP(+) + H(+) = 2 oxidized [2Fe-2S]-[ferredoxin] + NADPH. This Chlorobium chlorochromatii (strain CaD3) protein is Ferredoxin--NADP reductase.